Reading from the N-terminus, the 178-residue chain is Fatty-acid and retinol-binding protein 1 (178 aa).

A signal peptide spans 1–16; sequence MYHRLILLALIGTTMA. 2 coiled-coil regions span residues 67-89 and 130-153; these read DAAL…ELRN and KQAA…ELKV.

Belongs to the fatty-acid and retinol-binding protein (FARBP) family. In terms of processing, not glycosylated.

The protein resides in the secreted. Its function is as follows. Binds retinol and different fatty acids. This Wuchereria bancrofti protein is Fatty-acid and retinol-binding protein 1.